A 260-amino-acid chain; its full sequence is Arginine esterase (260 aa).

Positions 1 to 17 (MWFLALCLAMSLGWTGA) are cleaved as a signal peptide. A propeptide spans 18–24 (EPHFQPR) (activation peptide). Positions 25 to 257 (IIGGRECLKN…HLMWIKDTMK (233 aa)) constitute a Peptidase S1 domain. 5 disulfide bridges follow: C31–C172, C50–C66, C151–C218, C183–C197, and C208–C233. H65 acts as the Charge relay system in catalysis. An N-linked (GlcNAc...) asparagine glycan is attached at N79. Catalysis depends on D119, which acts as the Charge relay system. The Charge relay system role is filled by S212.

The protein belongs to the peptidase S1 family. Kallikrein subfamily.

It carries out the reaction Preferential cleavage of Arg-|-Xaa bonds in small molecule substrates. Highly selective action to release kallidin (lysyl-bradykinin) from kininogen involves hydrolysis of Met-|-Xaa or Leu-|-Xaa.. In terms of biological role, this serine protease is found in dog seminal plasma, its exact physiological function is not known. The protein is Arginine esterase of Canis lupus familiaris (Dog).